The primary structure comprises 253 residues: MRTVVVKVGGASVAGGALEDLPGVVSGGARVAVVHGGGRQLTRMLDSLGVPTSFREGLRVTDERTLEVAEMVFAGSVNKQLARGLLALGVPAAGVSGTDGPVLRVEPVPGLGRVGRVVAVETRLLETLWGGGFVPVVAPLGLGPRGAYNVNADDAAAALAVALGAGELLLLTDVDGLLRDDEPVPALTPAECERYVSSGVASGGMAPKLRAAAEAARGGVPARIINGGRRGALAGALAGGQVGTLVRQEGAFA.

Substrate contacts are provided by residues 37–38 (GG), R59, and N149.

This sequence belongs to the acetylglutamate kinase family. ArgB subfamily.

Its subcellular location is the cytoplasm. It carries out the reaction N-acetyl-L-glutamate + ATP = N-acetyl-L-glutamyl 5-phosphate + ADP. Its pathway is amino-acid biosynthesis; L-arginine biosynthesis; N(2)-acetyl-L-ornithine from L-glutamate: step 2/4. Its function is as follows. Catalyzes the ATP-dependent phosphorylation of N-acetyl-L-glutamate. In Rubrobacter xylanophilus (strain DSM 9941 / JCM 11954 / NBRC 16129 / PRD-1), this protein is Acetylglutamate kinase.